The primary structure comprises 861 residues: MNNPSTTKAPLADYLAHLPLAEEERERLGESASFSELHARLAGAEGAAADAGGDPALASVRARLQLGTPELDDAEMFGVDAQGRTFLKISPPIRRTKVIPEPWRTNILVRGWRRLTGRSNPPKPKRALPRARWQRVGSLRRFILLLLMLAQTSVATYYMKGILPYQGWAFVDLEELAQQSLLDTVQQVLPYVIQFGILALFAILFCWVSAGFWTALMGFWELLTGRDRYRISGSSAGSEPIAADARTAIVMPICNEDVPRVFAGLRATVESMAATGEMERFDFFVLSDTNDPDIAVAEQQAWLELCRETKGFGKIFYRRRRRRVKRKSGNIDDFCRRWGGDYRYMVVMDADSVMSGDCLAKLVRLMEANPEAGIIQTAPKASGMDTLYARMQQFATRVYGPLFTAGLHFWQLGESHYWGHNAIIRMQPFIDHCALAPLPGKGSFAGAILSHDFVEAALMRRAGWGVWIAYDLDGSYEELPPNLLDELKRDRRWCHGNLMNFRLFLVKGMHPVHRAVFLTGVMSYLSAPLWFFFLVLSTALLAVHQLMEPQYFLEPRQLFPIWPQWHPEKAIALFSTTLTLLFLPKLLSVMLIWAKGAKGFGGVIRVTLSMLLEMFFSVLLAPVRMLFHTRFVLAAFLGWSVQWNSPQRDDDATPWSEAIRRHGMQTLLGIAWTLLVAWLNPRFLWWLSPIVGSLILSIPVSVISSRVKLGLRARDEKLFLIPEEYDTPRELRATDEYTYENRWHALKDGFLKAAVDPLLNALACAMGTARHNRAQAIETVRGERIGKAIDKGPEQLDGATRLALLSDPVALSRLHTRVWEEDRDDWLGRWRKAEADDPHAASVPLAQVVPGDAGLLPAAQS.

6 helical membrane passes run 142–162, 188–208, 516–536, 573–593, 600–620, and 683–703; these read FILL…MKGI, VLPY…FCWV, VFLT…FLVL, LFST…MLIW, FGGV…SVLL, and FLWW…VSVI.

The protein belongs to the glycosyltransferase 2 family. OpgH subfamily.

The protein localises to the cell inner membrane. Its pathway is glycan metabolism; osmoregulated periplasmic glucan (OPG) biosynthesis. Its function is as follows. Involved in the biosynthesis of osmoregulated periplasmic glucans (OPGs). This chain is Glucans biosynthesis glucosyltransferase H, found in Pseudomonas aeruginosa (strain LESB58).